The chain runs to 499 residues: Glycerol kinase (499 aa).

An ADP-binding site is contributed by threonine 13. Residues threonine 13, threonine 14, and serine 15 each contribute to the ATP site. Residue threonine 13 participates in sn-glycerol 3-phosphate binding. Arginine 17 contacts ADP. Arginine 83, glutamate 84, tyrosine 135, and aspartate 245 together coordinate sn-glycerol 3-phosphate. Glycerol-binding residues include arginine 83, glutamate 84, tyrosine 135, aspartate 245, and glutamine 246. Residues threonine 267 and glycine 310 each contribute to the ADP site. ATP-binding residues include threonine 267, glycine 310, glutamine 314, and glycine 411. Residues glycine 411 and asparagine 415 each contribute to the ADP site.

It belongs to the FGGY kinase family.

The catalysed reaction is glycerol + ATP = sn-glycerol 3-phosphate + ADP + H(+). The protein operates within polyol metabolism; glycerol degradation via glycerol kinase pathway; sn-glycerol 3-phosphate from glycerol: step 1/1. With respect to regulation, inhibited by fructose 1,6-bisphosphate (FBP). In terms of biological role, key enzyme in the regulation of glycerol uptake and metabolism. Catalyzes the phosphorylation of glycerol to yield sn-glycerol 3-phosphate. The protein is Glycerol kinase of Stenotrophomonas maltophilia (strain K279a).